We begin with the raw amino-acid sequence, 112 residues long: Histone H2B (112 aa).

The segment at 1 to 24 is disordered; the sequence is MATPKSSSANRKKGGKKSHRKPKR. Basic residues predominate over residues 10-24; that stretch reads NRKKGGKKSHRKPKR.

The protein belongs to the histone H2B family. The nucleosome is a histone octamer containing two molecules each of H2A, H2B, H3 and H4 assembled in one H3-H4 heterotetramer and two H2A-H2B heterodimers. The octamer wraps approximately 147 bp of DNA.

Its subcellular location is the nucleus. The protein resides in the chromosome. Its function is as follows. Core component of nucleosome. Nucleosomes wrap and compact DNA into chromatin, limiting DNA accessibility to the cellular machineries which require DNA as a template. Histones thereby play a central role in transcription regulation, DNA repair, DNA replication and chromosomal stability. DNA accessibility is regulated via a complex set of post-translational modifications of histones, also called histone code, and nucleosome remodeling. The sequence is that of Histone H2B from Trypanosoma cruzi.